Here is a 785-residue protein sequence, read N- to C-terminus: Pre-rRNA-processing protein TSR1 homolog (785 aa).

The segment at 1-59 (MSTTGHRAGVFKKPSKPHKSWKGKRTKGEITSENRGREGVKQLTRSAHSTHRTISKDAR) is disordered. Basic residues predominate over residues 9 to 25 (GVFKKPSKPHKSWKGKR). The span at 26 to 40 (TKGEITSENRGREGV) shows a compositional bias: basic and acidic residues. The Bms1-type G domain occupies 83-243 (APCLVTVVSL…LRILNETKKK (161 aa)). The segment at 307-426 (PHPLKAHNKT…GETTASEMMF (120 aa)) is disordered. Residues 376–409 (LDDEDDEDEEDSDEDMDDSDNEEVEDDSEEEEPM) are compositionally biased toward acidic residues.

Belongs to the TRAFAC class translation factor GTPase superfamily. Bms1-like GTPase family. TSR1 subfamily.

Its subcellular location is the nucleus. The protein resides in the nucleolus. Its function is as follows. Required during maturation of the 40S ribosomal subunit in the nucleolus. This chain is Pre-rRNA-processing protein TSR1 homolog (tag-151), found in Caenorhabditis elegans.